A 913-amino-acid polypeptide reads, in one-letter code: Anoctamin-5 (913 aa).

Over 1–299 (MGDPDLLEVL…DLIKNYYGEK (299 aa)) the chain is Cytoplasmic. A helical transmembrane segment spans residues 300-320 (IGIYFVFLGFYTEMLFFAAVV). Over 321-380 (GLACFIYGLLSMEHNTSSTEICDPEIGGQMIMCPLCDQVCDYWRLNSTCLASKFSHLFDN) the chain is Extracellular. Residues Asn-335, Asn-366, and Asn-380 are each glycosylated (N-linked (GlcNAc...) asparagine). A helical membrane pass occupies residues 381-401 (ESTVFFAIFMGIWVTLFLEFW). The Cytoplasmic portion of the chain corresponds to 402–462 (KQRQARLEYE…YTRIPWYFLS (61 aa)). A helical transmembrane segment spans residues 463–483 (GATVTLWMSLVVTSMVAVIVY). At 484 to 511 (RLSVFATFASFMESDASLKQVKSFLTPQ) the chain is on the extracellular side. Residues 512–532 (ITTSLTGSCLNFIVILILNFF) traverse the membrane as a helical segment. The Cytoplasmic portion of the chain corresponds to 533-557 (YEKISAWITKMEIPRTYQEYESSLT). Residues 558–578 (LKMFLFQFVNFYSSCFYVAFF) traverse the membrane as a helical segment. Over 579–679 (KGKFVGYPGK…FYEYLETVTQ (101 aa)) the chain is Extracellular. The chain crosses the membrane as a helical span at residues 680 to 700 (FGFVTLFVASFPLAPLLALIN). At 701–732 (NIVEIRVDAWKLTTQYRRTVASKAHSIGVWQD) the chain is on the cytoplasmic side. Residues 733–753 (ILYGMAVLSVATNAFIVAFTS) form a helical membrane-spanning segment. Over 754-834 (DIIPRLVYYY…FWHVLAAKMT (81 aa)) the chain is Extracellular. Residues Asn-768, Asn-778, and Asn-791 are each glycosylated (N-linked (GlcNAc...) asparagine). Residues 835–855 (FIIVMEHVVFLVKFLLAWMIP) traverse the membrane as a helical segment. Residues 856-913 (DVPKDVVERIKREKLMTIKILHDFELNKLKENLGINSNEFAKHVMIEENKAQLAKSTL) lie on the Cytoplasmic side of the membrane.

It belongs to the anoctamin family. As to expression, highly expressed in brain, heart, kidney, lung, and skeletal muscle. Weakly expressed in bone marrow, fetal liver, placenta, spleen, thymus, osteoblasts and periodontal ligament cells.

It is found in the endoplasmic reticulum membrane. The protein localises to the cell membrane. Functionally, plays a role in plasma membrane repair in a process involving annexins. Does not exhibit calcium-activated chloride channel (CaCC) activity. The polypeptide is Anoctamin-5 (ANO5) (Homo sapiens (Human)).